Reading from the N-terminus, the 83-residue chain is Polcalcin Bra r 2 (83 aa).

EF-hand domains are found at residues 5-40 (TEKAEHDRIFKKFDANGDGKISASELGDALKNLGSV) and 43-75 (DDIKRMMAEIDTDGDGYISYQEFSDFASANRGL). Residues Asp18, Asn20, Asp22, Lys24, Glu29, Asp53, Asp55, Asp57, Tyr59, and Glu64 each contribute to the Ca(2+) site.

The polypeptide is Polcalcin Bra r 2 (Brassica campestris (Field mustard)).